Reading from the N-terminus, the 180-residue chain is Interleukin-17B (180 aa).

A signal peptide spans 1–20 (MDWPHNLLFLLTISIFLGLG). The disordered stretch occupies residues 22 to 44 (PRSPKSKRKGQGRPGPLAPGPHQ). Asn-75 carries an N-linked (GlcNAc...) asparagine glycan. Cystine bridges form between Cys-121/Cys-176 and Cys-126/Cys-178.

The protein belongs to the IL-17 family. Expressed in adult pancreas, small intestine, stomach, spinal cord and testis. Less pronounced expression in prostate, colon mucosal lining, and ovary.

It localises to the secreted. In terms of biological role, stimulates the release of tumor necrosis factor alpha and IL-1-beta from the monocytic cell line THP-1. The sequence is that of Interleukin-17B (IL17B) from Homo sapiens (Human).